A 349-amino-acid polypeptide reads, in one-letter code: S-adenosylmethionine:tRNA ribosyltransferase-isomerase (349 aa).

This sequence belongs to the QueA family. In terms of assembly, monomer.

It localises to the cytoplasm. It catalyses the reaction 7-aminomethyl-7-carbaguanosine(34) in tRNA + S-adenosyl-L-methionine = epoxyqueuosine(34) in tRNA + adenine + L-methionine + 2 H(+). It participates in tRNA modification; tRNA-queuosine biosynthesis. Functionally, transfers and isomerizes the ribose moiety from AdoMet to the 7-aminomethyl group of 7-deazaguanine (preQ1-tRNA) to give epoxyqueuosine (oQ-tRNA). The sequence is that of S-adenosylmethionine:tRNA ribosyltransferase-isomerase from Pseudomonas putida (strain GB-1).